We begin with the raw amino-acid sequence, 341 residues long: Tubulin-specific chaperone C (341 aa).

Met1 is modified (N-acetylmethionine). Basic and acidic residues predominate over residues 34–49; the sequence is ERQIEVERRKQKRQDQ. Residues 34–55 form a disordered region; it reads ERQIEVERRKQKRQDQEVEEEK. The residue at position 79 (Ser79) is a Phosphoserine. Residues 148-173 are disordered; the sequence is TAQVDAAPVTSAAPSPPVTKEEEGAP. The C-CAP/cofactor C-like domain occupies 163–318; it reads PPVTKEEEGA…NWDQVDDFNW (156 aa).

It belongs to the TBCC family. Supercomplex made of cofactors A to E. Cofactors A and D function by capturing and stabilizing tubulin in a quasi-native conformation. Cofactor E binds to the cofactor D-tubulin complex; interaction with cofactor C then causes the release of tubulin polypeptides that are committed to the native state.

The protein localises to the cytoplasm. In terms of biological role, tubulin-folding protein; involved in the final step of the tubulin folding pathway. The chain is Tubulin-specific chaperone C (Tbcc) from Mus musculus (Mouse).